The following is a 162-amino-acid chain: Regulatory protein RecX (162 aa).

This sequence belongs to the RecX family.

It localises to the cytoplasm. Functionally, modulates RecA activity. This Pectobacterium atrosepticum (strain SCRI 1043 / ATCC BAA-672) (Erwinia carotovora subsp. atroseptica) protein is Regulatory protein RecX.